Reading from the N-terminus, the 1532-residue chain is IgA-specific serine endopeptidase autotransporter (1532 aa).

The first 27 residues, 1–27, serve as a signal peptide directing secretion; that stretch reads MKAKRFKINAISLSIFLAYALTPYSEA. Residues 28–322 form the Peptidase S6 domain; sequence ALVRDDVDYQ…NIYKKEFADK (295 aa). Residue S278 is part of the active site. Disordered stretches follow at residues 979–1136 and 1166–1217; these read GRPV…KDNS and LEDE…NTEL. Over residues 989–1004 the composition is skewed to polar residues; that stretch reads AANTASQAQKATQTDG. The segment covering 1045–1101 has biased composition (basic and acidic residues); that stretch reads EAEKVARQKDEEAKRKAAEIARQQEEARKAAELAAKQKAEAERKARELARQKAEEAS. Over residues 1107-1116 the composition is skewed to basic residues; the sequence is KPKRRRRRAI. The span at 1207 to 1217 shows a compositional bias: basic and acidic residues; the sequence is SDKHPQDNTEL. Positions 1280-1532 constitute an Autotransporter domain; sequence ADAEKNSVWM…SGQIKIQIRF (253 aa).

The protein localises to the periplasm. It localises to the secreted. It is found in the cell surface. The protein resides in the cell outer membrane. The catalysed reaction is Cleavage of immunoglobulin A molecules at certain Pro-|-Xaa bonds in the hinge region. No small molecule substrates are known.. This protease is specific for immunoglobulin A. This is IgA-specific serine endopeptidase autotransporter (iga) from Neisseria gonorrhoeae.